Consider the following 155-residue polypeptide: Endoribonuclease YbeY (155 aa).

His120, His124, and His130 together coordinate Zn(2+).

This sequence belongs to the endoribonuclease YbeY family. Zn(2+) is required as a cofactor.

The protein localises to the cytoplasm. In terms of biological role, single strand-specific metallo-endoribonuclease involved in late-stage 70S ribosome quality control and in maturation of the 3' terminus of the 16S rRNA. The sequence is that of Endoribonuclease YbeY from Staphylococcus aureus (strain bovine RF122 / ET3-1).